The sequence spans 371 residues: COP9 signalosome complex subunit 5 (371 aa).

The region spanning V51 to G188 is the MPN domain. Residues H134, H136, and D147 each contribute to the Zn(2+) site. Positions H134–D147 match the JAMM motif motif. Over residues N278–T292 the composition is skewed to low complexity. Disordered regions lie at residues N278–T333 and T352–Y371. Residues K293–S313 show a composition bias toward basic and acidic residues. The segment covering N323 to T333 has biased composition (polar residues).

The protein belongs to the peptidase M67A family. CSN5 subfamily. Component of the COP9 signalosome (CSN) complex.

The protein localises to the cytoplasm. It is found in the nucleus. Catalytic Component of the COP9 signalosome (CSN) complex that acts as an regulator of the ubiquitin (Ubl) conjugation pathway by mediating the deneddylation of the cullin subunit of SCF-type E3 ubiquitin-protein ligase complexes. This is COP9 signalosome complex subunit 5 (RRI1) from Cryptococcus neoformans var. neoformans serotype D (strain B-3501A) (Filobasidiella neoformans).